A 475-amino-acid polypeptide reads, in one-letter code: Putative amidase AmiD (475 aa).

Catalysis depends on charge relay system residues K93 and S166. The Acyl-ester intermediate role is filled by S190.

The protein belongs to the amidase family.

It carries out the reaction a monocarboxylic acid amide + H2O = a monocarboxylate + NH4(+). In Mycobacterium bovis (strain ATCC BAA-935 / AF2122/97), this protein is Putative amidase AmiD (amiD).